Here is a 523-residue protein sequence, read N- to C-terminus: SWI/SNF and RSC complexes subunit arp9 (523 aa).

Positions 56–72 (INMEDPNVKTDETKVET) are enriched in basic and acidic residues. 2 disordered regions span residues 56–92 (INMEDPNVKTDETKVETSESTSEQPSNSNVTEEKNMG) and 319–339 (QKEREKNGESEKDEKPDNTDV). A compositionally biased stretch (polar residues) spans 79-92 (QPSNSNVTEEKNMG). Positions 319–336 (QKEREKNGESEKDEKPDN) are enriched in basic and acidic residues.

This sequence belongs to the actin family. In terms of assembly, component of the RSC complex composed of at least arp9, arp42, rsc1, rsc4, rsc7, rsc9, rsc58, sfh1, snf21, ssr1, ssr2, ssr3 and ssr4. The complex interacts with histone and histone variant components of centromeric chromatin. Component of the SWI/SNF global transcription activator complex composed of at least arp9, arp42, snf5, snf22, snf30, sbf59, sol1, ssr1, ssr2, ssr3, ssr4 and tfg3.

The protein resides in the cytoplasm. It is found in the nucleus. Functionally, component of the chromatin structure remodeling complex (RSC), which is involved in transcription regulation and nucleosome positioning. Controls particularly membrane and organelle development genes. Part of the SWI/SNF complex, an ATP-dependent chromatin remodeling complex, required for the positive and negative regulation of gene expression of a large number of genes. It changes chromatin structure by altering DNA-histone contacts within a nucleosome, leading eventually to a change in nucleosome position, thus facilitating or repressing binding of gene-specific transcription factors. The chain is SWI/SNF and RSC complexes subunit arp9 (arp9) from Schizosaccharomyces pombe (strain 972 / ATCC 24843) (Fission yeast).